We begin with the raw amino-acid sequence, 1705 residues long: Clathrin heavy chain 1 (1705 aa).

At Ala2 the chain carries N-acetylalanine. The segment at 2–492 is globular terminal domain; sequence AAANAPIIMK…VDNDLALKIY (491 aa). 7 WD40-like repeat regions span residues 25–67, 68–113, 114–155, 156–205, 206–270, 271–314, and 315–343; these read FITF…RPIT, ADSA…MPEQ, VAFW…ANLA, NNQI…QALE, AHAA…PDFA, DDFP…ISPD, and PIFL…ATVN. Residues 462 to 478 are binding site for the uncoating ATPase, involved in lattice disassembly; the sequence is ENWLAEDKLECSEELGD. The segment at 493 to 536 is flexible linker; that stretch reads IKARATPKVVAAFAERREFDKILIYSKQVGYTPDYMFLLQTILR. A distal segment region spans residues 537–648; the sequence is TDPQGAVNFA…QSLKHYSELP (112 aa). The segment at 537–1705 is heavy chain arm; the sequence is TDPQGAVNFA…PYGMPPMGGY (1169 aa). CHCR repeat units lie at residues 551-697, 700-842, 847-986, 993-1138, 1142-1283, 1288-1434, and 1437-1580; these read QMEG…QIIV, CKEY…PEDF, ILSV…QLID, LPES…VSDA, FIRA…FRLA, LNII…DIIN, and LNVL…KECF. Residues 653 to 1705 form a proximal segment region; it reads VIVNTHAIEP…PYGMPPMGGY (1053 aa). An involved in binding clathrin light chain region spans residues 1227-1536; sequence AAKIIYAFIS…YIYKKAGRWK (310 aa). The trimerization stretch occupies residues 1564–1705; sequence AEQLLVYFIE…PYGMPPMGGY (142 aa).

The protein belongs to the clathrin heavy chain family. As to quaternary structure, clathrin triskelions, composed of 3 heavy chains and 3 light chains, are the basic subunits of the clathrin coat. Interacts with SCYL2B.

The protein localises to the cytoplasmic vesicle membrane. It localises to the membrane. The protein resides in the coated pit. In terms of biological role, clathrin is the major protein of the polyhedral coat of coated pits and vesicles. Mediates endocytosis and is required for a correct polar distribution of PIN auxin transporters. This chain is Clathrin heavy chain 1, found in Arabidopsis thaliana (Mouse-ear cress).